The sequence spans 282 residues: Acetyl-coenzyme A carboxylase carboxyl transferase subunit beta (282 aa).

Residues 25 to 282 (VWRKCPHCNE…SQMLRIFMKQ (258 aa)) form the CoA carboxyltransferase N-terminal domain. The Zn(2+) site is built by cysteine 29, cysteine 32, cysteine 48, and cysteine 51. Residues 29–51 (CPHCNEIIYAKEIERNLNVCPKC) form a C4-type zinc finger.

It belongs to the AccD/PCCB family. In terms of assembly, acetyl-CoA carboxylase is a heterohexamer composed of biotin carboxyl carrier protein (AccB), biotin carboxylase (AccC) and two subunits each of ACCase subunit alpha (AccA) and ACCase subunit beta (AccD). Zn(2+) serves as cofactor.

The protein resides in the cytoplasm. The enzyme catalyses N(6)-carboxybiotinyl-L-lysyl-[protein] + acetyl-CoA = N(6)-biotinyl-L-lysyl-[protein] + malonyl-CoA. The protein operates within lipid metabolism; malonyl-CoA biosynthesis; malonyl-CoA from acetyl-CoA: step 1/1. Its function is as follows. Component of the acetyl coenzyme A carboxylase (ACC) complex. Biotin carboxylase (BC) catalyzes the carboxylation of biotin on its carrier protein (BCCP) and then the CO(2) group is transferred by the transcarboxylase to acetyl-CoA to form malonyl-CoA. The protein is Acetyl-coenzyme A carboxylase carboxyl transferase subunit beta of Syntrophotalea carbinolica (strain DSM 2380 / NBRC 103641 / GraBd1) (Pelobacter carbinolicus).